We begin with the raw amino-acid sequence, 366 residues long: MMTAIGMMSGTSLDGVDVALIETDGERVTAFGPTGYRPYTNDERGLLREALAEAVNLTRRDARPGVIGMAEHAVTMAHSDAVTSFLARNGIRREDIDIVGFHGQTVLHRPGERLTVQIGDADALAKAIRVPVMHDFRAADVAAGGQGAPFVPAYHRALAQSLGRDGPICVVNIGGVSNVTYIDGADTLIACDTGPGNALLDDFMLRTTGEPFDRDGRLAQQGRPDADWIASALNHPFFALPPPKSLDRNDFASLALPDRPPADGAATLTAFTAAAIARIVPLLPKAPERWIVAGGGARNPIMLEMLREKVAPAPVERADALGWSIDAMEAQAFGYLAARGLKGLPLSYPATTGVPVPMTGGVVTRP.

10–17 (GTSLDGVD) contributes to the ATP binding site.

Belongs to the anhydro-N-acetylmuramic acid kinase family.

The enzyme catalyses 1,6-anhydro-N-acetyl-beta-muramate + ATP + H2O = N-acetyl-D-muramate 6-phosphate + ADP + H(+). Its pathway is amino-sugar metabolism; 1,6-anhydro-N-acetylmuramate degradation. The protein operates within cell wall biogenesis; peptidoglycan recycling. In terms of biological role, catalyzes the specific phosphorylation of 1,6-anhydro-N-acetylmuramic acid (anhMurNAc) with the simultaneous cleavage of the 1,6-anhydro ring, generating MurNAc-6-P. Is required for the utilization of anhMurNAc either imported from the medium or derived from its own cell wall murein, and thus plays a role in cell wall recycling. The protein is Anhydro-N-acetylmuramic acid kinase of Nitrobacter winogradskyi (strain ATCC 25391 / DSM 10237 / CIP 104748 / NCIMB 11846 / Nb-255).